Here is a 404-residue protein sequence, read N- to C-terminus: Putative arginine deiminase (404 aa).

C394 acts as the Amidino-cysteine intermediate in catalysis.

Belongs to the arginine deiminase family.

It localises to the cytoplasm. The catalysed reaction is L-arginine + H2O = L-citrulline + NH4(+). It functions in the pathway amino-acid degradation; L-arginine degradation via ADI pathway; carbamoyl phosphate from L-arginine: step 1/2. The chain is Putative arginine deiminase (arcA) from Mycoplasma pneumoniae (strain ATCC 29342 / M129 / Subtype 1) (Mycoplasmoides pneumoniae).